A 63-amino-acid polypeptide reads, in one-letter code: Acrosin inhibitor 1 (63 aa).

In terms of domain architecture, Kazal-like spans Phe8–Tyr63. 3 disulfides stabilise this stretch: Cys14/Cys43, Cys21/Cys40, and Cys29/Cys61.

As to expression, seminal plasma.

It is found in the secreted. Strong inhibitor of acrosin. The sequence is that of Acrosin inhibitor 1 from Bos taurus (Bovine).